Here is a 466-residue protein sequence, read N- to C-terminus: Asparagine--tRNA ligase (466 aa).

Belongs to the class-II aminoacyl-tRNA synthetase family. Homodimer.

Its subcellular location is the cytoplasm. The catalysed reaction is tRNA(Asn) + L-asparagine + ATP = L-asparaginyl-tRNA(Asn) + AMP + diphosphate + H(+). The sequence is that of Asparagine--tRNA ligase from Psychromonas ingrahamii (strain DSM 17664 / CCUG 51855 / 37).